The chain runs to 192 residues: Phosphoheptose isomerase (192 aa).

The SIS domain maps to leucine 37–lysine 192. Asparagine 52 to glycine 54 is a binding site for substrate. Histidine 61 and glutamate 65 together coordinate Zn(2+). Substrate contacts are provided by residues glutamate 65, asparagine 93–aspartate 94, serine 119–serine 121, serine 124, and glutamine 172. 2 residues coordinate Zn(2+): glutamine 172 and histidine 180.

Belongs to the SIS family. GmhA subfamily. In terms of assembly, homotetramer. Zn(2+) is required as a cofactor.

The protein resides in the cytoplasm. It catalyses the reaction 2 D-sedoheptulose 7-phosphate = D-glycero-alpha-D-manno-heptose 7-phosphate + D-glycero-beta-D-manno-heptose 7-phosphate. It participates in carbohydrate biosynthesis; D-glycero-D-manno-heptose 7-phosphate biosynthesis; D-glycero-alpha-D-manno-heptose 7-phosphate and D-glycero-beta-D-manno-heptose 7-phosphate from sedoheptulose 7-phosphate: step 1/1. Catalyzes the isomerization of sedoheptulose 7-phosphate in D-glycero-D-manno-heptose 7-phosphate. This Shigella dysenteriae serotype 1 (strain Sd197) protein is Phosphoheptose isomerase.